Reading from the N-terminus, the 86-residue chain is UPF0297 protein STH1998 (86 aa).

This sequence belongs to the UPF0297 family.

The polypeptide is UPF0297 protein STH1998 (Symbiobacterium thermophilum (strain DSM 24528 / JCM 14929 / IAM 14863 / T)).